We begin with the raw amino-acid sequence, 275 residues long: F420-dependent methylenetetrahydromethanopterin dehydrogenase (275 aa).

This sequence belongs to the MTD family.

It carries out the reaction 5,10-methylenetetrahydromethanopterin + oxidized coenzyme F420-(gamma-L-Glu)(n) + 2 H(+) = 5,10-methenyl-5,6,7,8-tetrahydromethanopterin + reduced coenzyme F420-(gamma-L-Glu)(n). It participates in one-carbon metabolism; methanogenesis from CO(2); 5,10-methylene-5,6,7,8-tetrahydromethanopterin from 5,10-methenyl-5,6,7,8-tetrahydromethanopterin (coenzyme F420 route): step 1/1. Catalyzes the reversible reduction of methenyl-H(4)MPT(+) to methylene-H(4)MPT. This is F420-dependent methylenetetrahydromethanopterin dehydrogenase from Methanobrevibacter smithii (strain ATCC 35061 / DSM 861 / OCM 144 / PS).